The chain runs to 359 residues: DNA replication and repair protein RecF (359 aa).

Position 30-37 (30-37 (GNNGSGKT)) interacts with ATP.

The protein belongs to the RecF family.

It is found in the cytoplasm. In terms of biological role, the RecF protein is involved in DNA metabolism; it is required for DNA replication and normal SOS inducibility. RecF binds preferentially to single-stranded, linear DNA. It also seems to bind ATP. The polypeptide is DNA replication and repair protein RecF (Haemophilus influenzae (strain 86-028NP)).